A 312-amino-acid polypeptide reads, in one-letter code: Olfactory receptor 51I2 (312 aa).

Residues 1–25 (MGLFNVTHPAFFLLTGIPGLESSHS) are Extracellular-facing. Asparagine 5 carries an N-linked (GlcNAc...) asparagine glycan. Residues 26-46 (WLSGPLCVMYAVALGGNTVIL) traverse the membrane as a helical segment. Over 47-54 (QAVRVEPS) the chain is Cytoplasmic. A helical transmembrane segment spans residues 55 to 75 (LHEPMYYFLSMLSFSDVAISM). Topologically, residues 76–99 (ATLPTVLRTFCLNARNITFDACLI) are extracellular. Cysteine 97 and cysteine 189 form a disulfide bridge. A helical membrane pass occupies residues 100–120 (QMFLIHFFSMMESGILLAMSF). The Cytoplasmic portion of the chain corresponds to 121 to 139 (DRYVAICDPLRYATVLTTE). The helical transmembrane segment at 140–160 (VIAAMGLGAAARSFITLFPLP) threads the bilayer. Residues 161 to 196 (FLIKRLPICRSNVLSHSYCLHPDMMRLACADISINS) are Extracellular-facing. Residues 197–217 (IYGLFVLVSTFGMDLFFIFLS) traverse the membrane as a helical segment. At 218–237 (YVLILRSVMATASREERLKA) the chain is on the cytoplasmic side. Residues 238–258 (LNTCVSHILAVLAFYVPMIGV) traverse the membrane as a helical segment. At 259 to 273 (STVHRFGKHVPCYIH) the chain is on the extracellular side. The chain crosses the membrane as a helical span at residues 274–294 (VLMSNVYLFVPPVLNPLIYSA). Residues 295–312 (KTKEIRRAIFRMFHHIKI) are Cytoplasmic-facing.

It belongs to the G-protein coupled receptor 1 family.

The protein localises to the cell membrane. In terms of biological role, odorant receptor. In Homo sapiens (Human), this protein is Olfactory receptor 51I2 (OR51I2).